Here is a 356-residue protein sequence, read N- to C-terminus: S-adenosylmethionine:tRNA ribosyltransferase-isomerase (356 aa).

Belongs to the QueA family. In terms of assembly, monomer.

The protein resides in the cytoplasm. The catalysed reaction is 7-aminomethyl-7-carbaguanosine(34) in tRNA + S-adenosyl-L-methionine = epoxyqueuosine(34) in tRNA + adenine + L-methionine + 2 H(+). It functions in the pathway tRNA modification; tRNA-queuosine biosynthesis. Transfers and isomerizes the ribose moiety from AdoMet to the 7-aminomethyl group of 7-deazaguanine (preQ1-tRNA) to give epoxyqueuosine (oQ-tRNA). The protein is S-adenosylmethionine:tRNA ribosyltransferase-isomerase of Escherichia coli O1:K1 / APEC.